A 342-amino-acid polypeptide reads, in one-letter code: Phomopsin biosynthesis cluster protein B (342 aa).

The tract at residues 1-22 (MESIAKAKSLPNKGRTYDSQRP) is disordered. The helical transmembrane segment at 87-107 (VLIIGCAVISLFAIIGALGFA) threads the bilayer. The tract at residues 118 to 186 (CASPAHQNPH…QCGESPDEAQ (69 aa)) is disordered. Over residues 144-155 (HSGSHSSSSSTN) the composition is skewed to low complexity. N-linked (GlcNAc...) asparagine glycosylation occurs at asparagine 248.

The protein localises to the membrane. Part of the gene cluster that mediates the biosynthesis of the phomopsins, a group of hexapeptide mycotoxins which infects lupins and causes lupinosis disease in livestock. The role of phomB within the phomopsins biosynthesis pathway has still to be determined. The pathway starts with the processing of the precursor phomA by several endopeptidases including kexin proteases as well as the cluster-specific S41 family peptidase phomP1 and the oligopeptidase phomG to produce 10 identical copies of the hexapeptide Tyr-Val-Ile-Pro-Ile-Asp. After being excised from the precursor peptide, the core peptides are cyclized and modified post-translationally by enzymes encoded within the gene cluster. The timing and order of proteolysis of the phomA precursor and PTMs are still unknown. Two tyrosinase-like enzymes, phomQ1 and phomQ2, catalyze the chlorination and hydroxylation of Tyr, respectively. PhomYb, is proposed to be involved in the construction of the macrocyclic structure. The other 4 ustYa family proteins may be involved in PTMs that generate the unique structure of phomopsin A. PhomYa is required for the hydroxylation of C-beta of Tyr. PhomYc, phomYd, and phomYe are responsible for the biosynthesis of 2,3-dehydroisoleucine (dIle), 2,3-dehydroaspartic acid (dAsp), and 3,4-dehydroproline (dPro), respectively. While dIle formation by phomYc is indispensable for the installation of dAsp by phomYd, the order of the other PTMs have not been elucidated yet. Most of the biosynthetic enzymes likely have broad substrate specificity, and thus, there might be a metabolic grid from a precursor to phomopsin A. The enzyme(s) responsible for the biosynthesis of 3,4-dehydrovaline (dVal) have also not been identified yet. Finally, phomM acts as an S-adenosylmethionine-dependent alpha-N-methyltransferase that catalyzes two successive N-methylation reactions, converting N-desmethyl-phomopsin A to phomopsin A and phomopsin A further to an N,N-dimethylated congener called phomopsin E. The protein is Phomopsin biosynthesis cluster protein B of Diaporthe leptostromiformis (Lupinosis disease fungus).